Consider the following 474-residue polypeptide: Sensor protein CreC (474 aa).

At 1-6 (MRIGMR) the chain is on the periplasmic side. A helical transmembrane segment spans residues 7–27 (LLLGYFLLVAVAAWFVLAIFV). Residues 28–146 (KEVKPGVRRA…LQNPADPESS (119 aa)) lie on the Cytoplasmic side of the membrane. The chain crosses the membrane as a helical span at residues 147-167 (VMYVAAPIMDGSRLIGVLSVG). At 168-183 (KPNAAMAPVIKRSERR) the chain is on the periplasmic side. Residues 184–204 (ILWASAILLGIALVIGAGMVW) form a helical membrane-spanning segment. The region spanning 205–255 (WINRSIARLTRYADSVTDNKPVPLPDLGSSELRKLAQALESMRVKLEGKNY) is the HAMP domain. Residues 205-474 (WINRSIARLT…ASLRLHRHFT (270 aa)) lie on the Cytoplasmic side of the membrane. In terms of domain architecture, Histidine kinase spans 262–473 (ALTHELKSPL…LASLRLHRHF (212 aa)). Phosphohistidine; by autocatalysis is present on His-265.

Post-translationally, autophosphorylated.

It is found in the cell inner membrane. The catalysed reaction is ATP + protein L-histidine = ADP + protein N-phospho-L-histidine.. Member of the two-component regulatory system CreC/CreB involved in catabolic regulation. CreC may function as a membrane-associated protein kinase that phosphorylates CreB in response to environmental signals. CreC can also phosphorylate PhoB. The chain is Sensor protein CreC (creC) from Escherichia coli (strain K12).